Reading from the N-terminus, the 92-residue chain is UPF0213 protein H16_B0156 (92 aa).

One can recognise a GIY-YIG domain in the interval 5–80; it reads SAWYLYLLEC…KRLSSTQKRA (76 aa).

Belongs to the UPF0213 family.

The protein is UPF0213 protein H16_B0156 of Cupriavidus necator (strain ATCC 17699 / DSM 428 / KCTC 22496 / NCIMB 10442 / H16 / Stanier 337) (Ralstonia eutropha).